We begin with the raw amino-acid sequence, 514 residues long: Na(+)/H(+) antiporter NhaB (514 aa).

Helical transmembrane passes span 23–43 (LALLVFLIVNPFIFLANPFIA), 63–83 (PLLPGGLLAIEAVIIGMTSAA), 97–117 (LLLMFMVAGIYFMKQLLLFIF), 120–140 (LLLSIRSKMVLSLAFCVAAAF), 144–164 (FLDALTVVAVVISVAVGFYGI), 202–222 (LMMHAGVGTALGGVMTMVGEP), 238–258 (FFLRMSPVTVPVLVCGLLTCM), 303–323 (AVIGVWLVTALALHLAEVGLI), 357–377 (LTVFFSIVAVIIDQHLFAPII), 391–411 (LFYLFNGLLSSISDNVFVGTI), 447–467 (ATPNGQAAFLFLLTSALAPLI), and 475–495 (VWMALPYTIVLTLIGLLCVEF).

It belongs to the NhaB Na(+)/H(+) (TC 2.A.34) antiporter family.

The protein localises to the cell inner membrane. The enzyme catalyses 2 Na(+)(in) + 3 H(+)(out) = 2 Na(+)(out) + 3 H(+)(in). Functionally, na(+)/H(+) antiporter that extrudes sodium in exchange for external protons. The polypeptide is Na(+)/H(+) antiporter NhaB (Salmonella gallinarum (strain 287/91 / NCTC 13346)).